The chain runs to 500 residues: MNHFPWLTIIVVLPIFAGSLIFFLPHRGNRVIFWYTICISILELLLTTYAFCYHFQSDDPLIQLVEDYKWIDFFDFHWRLGIDGLSIGPILLTGFITTLATLAARPVTRDARLFHFLMLVMYSGQIGLFSCRDLLLFFLMWEFELIPVYLLLSMWGGKKRLYSATKFILYTAGGSVFLLMGALGIGLYGSNEPTFNLEILANQSYPVALERIFYIGFFIAFAVKLPIIPLHTWLPDTHGEAHYSTCMLLAGILLKMGAYGLVRINMELLSHAHSLFSPWLMIVGAMQIIYAASTSLGQRNLKKRIAYSSVSHMGFLIIGIGSITDIGLDGALLQIISHGFIGAALFFLAGTTYDRIRLVYLDEMGGIAIPMPKIFTMFSIFSMASLALPGMSGFVTEFIVFFGLITSPKYLLMAKILIPFVMAIGIILTPIYSLSMSRQMFYGYKIFNAPNSYFLDSGPRELFLSISIFLPILGIGLYPDFVLSLSVDKVEVILSNSFDR.

A run of 14 helical transmembrane segments spans residues 4–24, 31–51, 84–104, 111–131, 134–154, 167–187, 212–232, 242–262, 272–292, 308–328, 330–350, 386–406, 411–431, and 462–482; these read FPWLTIIVVLPIFAGSLIFFL, VIFWYTICISILELLLTTYAF, GLSIGPILLTGFITTLATLAA, ARLFHFLMLVMYSGQIGLFSC, LLLFFLMWEFELIPVYLLLSM, FILYTAGGSVFLLMGALGIGL, IFYIGFFIAFAVKLPIIPLHT, HYSTCMLLAGILLKMGAYGLV, AHSLFSPWLMIVGAMQIIYAA, SSVSHMGFLIIGIGSITDIGL, GALLQIISHGFIGAALFFLAG, LALPGMSGFVTEFIVFFGLIT, LLMAKILIPFVMAIGIILTPI, and LFLSISIFLPILGIGLYPDFV.

The protein belongs to the complex I subunit 4 family.

Its subcellular location is the plastid. It localises to the chloroplast thylakoid membrane. It carries out the reaction a plastoquinone + NADH + (n+1) H(+)(in) = a plastoquinol + NAD(+) + n H(+)(out). The catalysed reaction is a plastoquinone + NADPH + (n+1) H(+)(in) = a plastoquinol + NADP(+) + n H(+)(out). The sequence is that of NAD(P)H-quinone oxidoreductase chain 4, chloroplastic from Jasminum nudiflorum (Winter jasmine).